Consider the following 38-residue polypeptide: Photosystem II reaction center protein L (38 aa).

The chain crosses the membrane as a helical span at residues 17 to 37; sequence SLFWGLLLIFVLAVLFSSYFF.

This sequence belongs to the PsbL family. As to quaternary structure, PSII is composed of 1 copy each of membrane proteins PsbA, PsbB, PsbC, PsbD, PsbE, PsbF, PsbH, PsbI, PsbJ, PsbK, PsbL, PsbM, PsbT, PsbX, PsbY, PsbZ, Psb30/Ycf12, at least 3 peripheral proteins of the oxygen-evolving complex and a large number of cofactors. It forms dimeric complexes.

It localises to the plastid. The protein resides in the chloroplast thylakoid membrane. Functionally, one of the components of the core complex of photosystem II (PSII). PSII is a light-driven water:plastoquinone oxidoreductase that uses light energy to abstract electrons from H(2)O, generating O(2) and a proton gradient subsequently used for ATP formation. It consists of a core antenna complex that captures photons, and an electron transfer chain that converts photonic excitation into a charge separation. This subunit is found at the monomer-monomer interface and is required for correct PSII assembly and/or dimerization. The polypeptide is Photosystem II reaction center protein L (Porphyra purpurea (Red seaweed)).